The following is a 211-amino-acid chain: Inactive ribonuclease-like protein 10 (211 aa).

Residues Met-1 to Gly-24 form the signal peptide.

This sequence belongs to the pancreatic ribonuclease family. Post-translationally, the N-terminus is blocked. Glycosylated.

It localises to the secreted. In terms of biological role, secreted proximal epididymal protein required for post-testicular sperm maturation and male fertility. May be involved in sperm adhesion to the egg zona pellucida. Does not have ribonuclease activity. The sequence is that of Inactive ribonuclease-like protein 10 (RNASE10) from Bos taurus (Bovine).